A 379-amino-acid chain; its full sequence is Oxidoreductase chry3 (379 aa).

Disordered stretches follow at residues M1 to P23 and E126 to M150. Over residues E126–D138 the composition is skewed to acidic residues.

Belongs to the asaB hydroxylase/desaturase family.

Its pathway is pigment biosynthesis. Functionally, oxidoreductase; part of the gene cluster that mediates the biosynthesis of the yellow pigment chrysogine. Pyruvic acid and anthranilic acid are likely substrates for the nonribosomal peptide synthetase chry1/NRPS14, with pyruvic acid adenylated by the first A domain and anthranilic acid by the second. If pyruvic acid and anthranilic acid are merged and released from chry1/NRPS14 by hydrolysis, a subsequent amidation would lead to 2-pyruvoylaminobenzamide. This process is probably catalyzed by the amidotransferase chry2 using glutamine as amino donor. The dehydrogenase chry5 that has a terminal berberine bridge domain for C-N cyclization could catalyze the cyclization of 2-pyruvoylaminobenzamide to yield acetyl-4(3H)-quinazolidinone. A final reduction of acetyl-4(3H)-quinazolidinone catalyzed by the oxidoreductase chry4 would result in chrysogine. In Gibberella zeae (strain ATCC MYA-4620 / CBS 123657 / FGSC 9075 / NRRL 31084 / PH-1) (Wheat head blight fungus), this protein is Oxidoreductase chry3.